The following is a 404-amino-acid chain: Argininosuccinate synthase (404 aa).

Residues Ala10–Ser18 and Ala38 each bind ATP. Residue Tyr89 participates in L-citrulline binding. Gly119 is an ATP binding site. L-aspartate-binding residues include Thr121, Asn125, and Asp126. Asn125 is an L-citrulline binding site. 5 residues coordinate L-citrulline: Arg129, Ser177, Ser186, Glu262, and Tyr274.

Belongs to the argininosuccinate synthase family. Type 1 subfamily. Homotetramer.

It localises to the cytoplasm. The enzyme catalyses L-citrulline + L-aspartate + ATP = 2-(N(omega)-L-arginino)succinate + AMP + diphosphate + H(+). Its pathway is amino-acid biosynthesis; L-arginine biosynthesis; L-arginine from L-ornithine and carbamoyl phosphate: step 2/3. The chain is Argininosuccinate synthase from Prochlorococcus marinus (strain MIT 9515).